Consider the following 412-residue polypeptide: Diphosphomevalonate decarboxylase MVD1, peroxisomal (412 aa).

Residue 23 to 26 coordinates (R)-5-diphosphomevalonate; the sequence is YWGK. A Peroxisomal targeting signal PTS2 motif is present at residues 40 to 48; that stretch reads SVTLDPDHL. (R)-5-diphosphomevalonate is bound by residues arginine 78, 161–166, and threonine 217; that span reads SGSACR.

The protein belongs to the diphosphomevalonate decarboxylase family. Homodimer.

The protein resides in the peroxisome. The enzyme catalyses (R)-5-diphosphomevalonate + ATP = isopentenyl diphosphate + ADP + phosphate + CO2. It functions in the pathway isoprenoid biosynthesis; isopentenyl diphosphate biosynthesis via mevalonate pathway; isopentenyl diphosphate from (R)-mevalonate: step 3/3. Functionally, performs the first committed step in the biosynthesis of isoprene-containing compounds such as sterols and terpenoids. Is specific for (R)-5-diphosphomevalonate (MVAPP). The catalytic efficiency with (R)-5-phosphomevalonate (MVAP) as substrate is 10000-fold lower than for MVAPP. Can complement a yeast mutant defective in MVD activity. In Arabidopsis thaliana (Mouse-ear cress), this protein is Diphosphomevalonate decarboxylase MVD1, peroxisomal.